The following is a 229-amino-acid chain: MKKITIAIDGFSSCGKSTMAKDLAKEIGYIYIDSGAMYRAVTLYSIENGIFHGDTIDTDELKRRIGDIHISFRIDPETGRPNTYLNGVNVENKIRTMEVSSKVSPISALGFVREAMVAQQQEMGKAKGIVMDGRDIGTTVFPDAELKIFVTASAEIRAQRRYDELKAKGQETGFEEILENVKQRDHIDQTREVSPLKKADDALLLDNSHLTIAEQKEWLMAEYQKAIKA.

10-18 (GFSSCGKST) serves as a coordination point for ATP.

It belongs to the cytidylate kinase family. Type 1 subfamily.

It localises to the cytoplasm. It catalyses the reaction CMP + ATP = CDP + ADP. It carries out the reaction dCMP + ATP = dCDP + ADP. In Bacteroides fragilis (strain ATCC 25285 / DSM 2151 / CCUG 4856 / JCM 11019 / LMG 10263 / NCTC 9343 / Onslow / VPI 2553 / EN-2), this protein is Cytidylate kinase.